The chain runs to 534 residues: Light-independent protochlorophyllide reductase subunit B (534 aa).

Aspartate 36 contributes to the [4Fe-4S] cluster binding site. Aspartate 274 (proton donor) is an active-site residue. Residue 409-410 participates in substrate binding; that stretch reads GL. The tract at residues 426–446 is disordered; that stretch reads DEAGPSHHGGKAVPASAPRAD.

This sequence belongs to the ChlB/BchB/BchZ family. In terms of assembly, protochlorophyllide reductase is composed of three subunits; BchL, BchN and BchB. Forms a heterotetramer of two BchB and two BchN subunits. It depends on [4Fe-4S] cluster as a cofactor.

The enzyme catalyses chlorophyllide a + oxidized 2[4Fe-4S]-[ferredoxin] + 2 ADP + 2 phosphate = protochlorophyllide a + reduced 2[4Fe-4S]-[ferredoxin] + 2 ATP + 2 H2O. It participates in porphyrin-containing compound metabolism; bacteriochlorophyll biosynthesis (light-independent). Component of the dark-operative protochlorophyllide reductase (DPOR) that uses Mg-ATP and reduced ferredoxin to reduce ring D of protochlorophyllide (Pchlide) to form chlorophyllide a (Chlide). This reaction is light-independent. The NB-protein (BchN-BchB) is the catalytic component of the complex. This Cereibacter sphaeroides (strain ATCC 17029 / ATH 2.4.9) (Rhodobacter sphaeroides) protein is Light-independent protochlorophyllide reductase subunit B.